The following is a 430-amino-acid chain: Adenylosuccinate synthetase (430 aa).

GTP-binding positions include 12–18 and 40–42; these read GDEGKGK and GHT. Asp-13 acts as the Proton acceptor in catalysis. Mg(2+)-binding residues include Asp-13 and Gly-40. Residues 13-16, 38-41, Thr-130, Arg-144, Gln-225, Thr-240, and Arg-304 contribute to the IMP site; these read DEGK and NAGH. His-41 (proton donor) is an active-site residue. Substrate is bound at residue 300-306; the sequence is ATTGRPR. GTP-binding positions include Arg-306, 332–334, and 414–416; these read KLD and SIG.

This sequence belongs to the adenylosuccinate synthetase family. In terms of assembly, homodimer. Mg(2+) serves as cofactor.

The protein resides in the cytoplasm. The catalysed reaction is IMP + L-aspartate + GTP = N(6)-(1,2-dicarboxyethyl)-AMP + GDP + phosphate + 2 H(+). Its pathway is purine metabolism; AMP biosynthesis via de novo pathway; AMP from IMP: step 1/2. Plays an important role in the de novo pathway of purine nucleotide biosynthesis. Catalyzes the first committed step in the biosynthesis of AMP from IMP. The sequence is that of Adenylosuccinate synthetase from Geobacter metallireducens (strain ATCC 53774 / DSM 7210 / GS-15).